A 208-amino-acid polypeptide reads, in one-letter code: DNA-binding protein HupB (208 aa).

The segment at 1-90 is bacterial histone-like domain; that stretch reads MNKAELIDVL…PGAQFKAVIS (90 aa). K3 carries the post-translational modification N6-acetyllysine. K3 bears the N6-acetyllysine; alternate; partial mark. At K3 the chain carries N6-methyllysine; alternate; partial. Residue K72 is modified to N6-acetyllysine; partial. N6-methyllysine; partial is present on K86. The C-terminus, required for nucleoid localization stretch occupies residues 92-208; that stretch reads AQKLPADGPA…KKAPAKKGRR (117 aa). An N6-acetyllysine; alternate; partial mark is found at K94 and K103. Residues K94 and K103 each carry the N6-methyllysine; alternate; partial modification. Residues 96 to 208 form a disordered region; that stretch reads PADGPAVKRG…KKAPAKKGRR (113 aa). Residues 101–205 form a degenerate repeats region region; that stretch reads AVKRGVTAGP…AAAKKAPAKK (105 aa). The segment covering 113 to 208 has biased composition (basic residues); it reads KAAKKAPAKK…KKAPAKKGRR (96 aa). K116, K136, K149, and K168 each carry N6-acetyllysine.

Belongs to the bacterial histone-like protein family. Long actinobacterial subfamily. As to quaternary structure, may form oligomers. Interacts with RNase E (rne). Post-translationally, in addition to the identifed modifications, is also methylated on one of Arg-53; Arg-54 or Arg-55.

Its subcellular location is the cytoplasm. It localises to the nucleoid. The protein localises to the secreted. The protein resides in the cell wall. The enzyme catalyses 4 Fe(2+) + O2 + 4 H(+) = 4 Fe(3+) + 2 H2O. Its activity is regulated as follows. Trans-stilbene derivative 4,4'-[(E)-ethene-1,2 diylbis({5[(phenylcarbonyl)amino]benzene-2,1-diyl}sulfonylimino)] dibenzoic acid (SD1) inhibits DNA binding at 50 uM. SD1 does not inhibit growth in a range of 3-1600 uM. A nucleoid-associated protein (NAP) that plays a crucial role in local chromosome architecture. Helps organize newly replicated oriC proximal regions and contributes to the timing of replication initiation and coordinating replication with chromosome segregation. There are between 30,000-60,000 molecules in a log phase cell; the protein-DNA complex is dynamic during the cell cycle, with more complexes near the cell ends. Binds irregularly along the chromosome with higher binding near the origin of replication (oriC) and lowest binding near the chromosome terminus (ter). Binds DNA non-sequence specifically via both its N- and C-terminal domains with high affinity, has no preference for linear or supercoiled DNA. Binds four-way junction DNA. Represses T7 RNA polymerase in vitro. The C-terminal domain enhances DNA end-joining in vitro in the presence of T4 DNA ligase. RNase E and HupB jointly contribute to cellular adaptation to changing growth conditions and survival during antibiotic treatment. Functionally, has ferroxidase activity, converts Fe(2+) into Fe(3+). Binds Fe(3+) but not Fe(2+); prevents the generation of hydroxyl radicals by the Fenton reaction and thus protects DNA from damage. May function in iron storage. Its function is as follows. Plays a role in epigenetic resistance to antibiotics. Growth on levels of isoniazid (INH) near the minimal inhibitory concentration (MIC) kills most bacteria. The surviving cells grow as either large or small colony variants (SCV), evidence suggest SCVs are associated with persistent infections. Mutating this protein leads to specific loss of SCVs. In terms of biological role, may play a role in cell wall assembly. The chain is DNA-binding protein HupB from Mycolicibacterium smegmatis (strain ATCC 700084 / mc(2)155) (Mycobacterium smegmatis).